A 545-amino-acid chain; its full sequence is Arginine-containing cyclodipeptide synthase ateA (545 aa).

Over residues 390-425 the composition is skewed to polar residues; the sequence is GNQQTPTQSADMDSTVSHRQQQPASSRSYTSKQNQM. Residues 390–433 are disordered; it reads GNQQTPTQSADMDSTVSHRQQQPASSRSYTSKQNQMPRPLVISV. Residues 434-438 carry the Conserved DDXXE motif motif; sequence DDPSE.

The protein belongs to the arginine-containing cyclodipeptide synthase family.

The catalysed reaction is L-glutamyl-tRNA(Glu) + L-arginyl-tRNA(Arg) = cyclo(L-arginyl-L-glutamyl) + tRNA(Glu) + tRNA(Arg) + 2 H(+). Its pathway is secondary metabolite biosynthesis. Arginine-containing cyclodipeptide synthase; part of the cluster that mediates the biosynthesis of a highly modified cyclo-arginine-glutamate dipeptide (cRE). Within the pathway, ateA acts as the scaffold-generating enzyme and is responsible for formation of the cyclo-Arg-Glu diketopiperazine (cRW) from L-arginyl-tRNA(Arg) + L-glutamyl-tRNA(Glu). Additional enzymes from the cluster then further modify the cyclo-Arg-Glu diketopiperazine (cRW) scaffold. The polypeptide is Arginine-containing cyclodipeptide synthase ateA (Aspergillus terreus).